A 491-amino-acid polypeptide reads, in one-letter code: Serine/threonine-protein phosphatase 2A regulatory subunit B'' subunit delta (491 aa).

Residues 331–366 form the EF-hand domain; sequence TTPTSTEYWFRCMDLDGDGALSMFELEFFYEEQAQR. Residues D344, D346, D348, and E355 each contribute to the Ca(2+) site. Composition is skewed to acidic residues over residues 460–473 and 481–491; these read AMAEDDDDHDEGSD and ADEDCDDLEPL. Positions 460 to 491 are disordered; that stretch reads AMAEDDDDHDEGSDPIDLYGLADEDCDDLEPL.

PP2A consists of a common heterodimeric core enzyme, composed of a 36 kDa catalytic subunit (subunit C) and a 65 kDa constant regulatory subunit (PR65 or subunit A), that associates with a variety of regulatory subunits. Proteins that associate with the core dimer include three families of regulatory subunits B (the R2/B/PR55/B55, R3/B''/PR72/PR130/PR59 and R5/B'/B56 families), the 48 kDa variable regulatory subunit, viral proteins, and cell signaling molecules. As to expression, expressed in testis, kidney, liver, lung, spleen, brain and heart.

In terms of biological role, the B regulatory subunit might modulate substrate selectivity and catalytic activity, and might also direct the localization of the catalytic enzyme to a particular subcellular compartment. Interacts with retinoblastoma-related protein p107 (in vivo). May target PP2A core dimer to p107 resulting in dephosphorylation of p107. This Mus musculus (Mouse) protein is Serine/threonine-protein phosphatase 2A regulatory subunit B'' subunit delta (Ppp2r3d).